Here is a 192-residue protein sequence, read N- to C-terminus: Fe/S biogenesis protein NfuA (192 aa).

The [4Fe-4S] cluster site is built by Cys149 and Cys152.

This sequence belongs to the NfuA family. In terms of assembly, homodimer. It depends on [4Fe-4S] cluster as a cofactor.

In terms of biological role, involved in iron-sulfur cluster biogenesis. Binds a 4Fe-4S cluster, can transfer this cluster to apoproteins, and thereby intervenes in the maturation of Fe/S proteins. Could also act as a scaffold/chaperone for damaged Fe/S proteins. In Colwellia psychrerythraea (strain 34H / ATCC BAA-681) (Vibrio psychroerythus), this protein is Fe/S biogenesis protein NfuA.